A 191-amino-acid polypeptide reads, in one-letter code: MEHNKKELNKAVLLAVIRAAHGIRGDVVVNLLGAEPQRLKTYGVLYDDKGRLYEIVSMRVHKNNVIVRFKGVDDRSTAEALKGVQLYIERDQFADDLDTDEFYQIDLIGLRVYDNTNQLLGEVSGFFNFGAGDLLEVRLISHKTELIPFSKAAVPEICVASGFLVVDPVAAGLFSDPHSFNDLALNDLEKG.

Residues 99–172 enclose the PRC barrel domain; it reads TDEFYQIDLI…FLVVDPVAAG (74 aa).

This sequence belongs to the RimM family. As to quaternary structure, binds ribosomal protein uS19.

It localises to the cytoplasm. An accessory protein needed during the final step in the assembly of 30S ribosomal subunit, possibly for assembly of the head region. Essential for efficient processing of 16S rRNA. May be needed both before and after RbfA during the maturation of 16S rRNA. It has affinity for free ribosomal 30S subunits but not for 70S ribosomes. This is Ribosome maturation factor RimM from Bartonella bacilliformis (strain ATCC 35685 / KC583 / Herrer 020/F12,63).